The sequence spans 103 residues: Matrix Gla protein (103 aa).

A signal peptide spans 1–19 (MRSLLLLTVLAALVVAILC). At Glu-21 the chain carries 4-carboxyglutamate. Ser-22, Ser-25, and Ser-28 each carry phosphoserine. In terms of domain architecture, Gla spans 51–97 (MAKAQERVREQRKPAYELNREACDDYKLCERYAMVYGYNAAYNRYFR). Glu-56, Glu-60, Glu-67, and Glu-71 each carry 4-carboxyglutamate. An intrachain disulfide couples Cys-73 to Cys-79.

The protein belongs to the osteocalcin/matrix Gla protein family. In terms of processing, requires vitamin K-dependent gamma-carboxylation for its function.

Its subcellular location is the secreted. Functionally, associates with the organic matrix of bone and cartilage. Thought to act as an inhibitor of bone formation. The protein is Matrix Gla protein (MGP) of Oryctolagus cuniculus (Rabbit).